The following is a 211-amino-acid chain: MALLTAKTFSLQFNNKRRIKRPYYPRKALLCYQLTPQNGSTPTRGYFKNKKKCHAEIRFINEIKSMGLDETQCYQVTCYLTWSPCPSCVRELVAFIKAHDHLNLRIFASRLYCHWCRRQQEGLRLLCGSQVPVEVMGSREFADCWENFVDHEKPLSFNPSEMLEELDKNSRAIKRRLERIKQSWSVDVLENGLRSLQLGPVSSSLSRSNSR.

The 123-residue stretch at 4–126 (LTAKTFSLQF…RRQQEGLRLL (123 aa)) folds into the CMP/dCMP-type deaminase domain. Histidine 54 is a Zn(2+) binding site. Glutamate 56 (proton donor) is an active-site residue. Cysteine 85 and cysteine 88 together coordinate Zn(2+).

The protein belongs to the cytidine and deoxycytidylate deaminase family. As to quaternary structure, homodimer. Requires Zn(2+) as cofactor.

It localises to the cytoplasm. The enzyme catalyses a 2'-deoxycytidine in single-stranded DNA + H2O + H(+) = a 2'-deoxyuridine in single-stranded DNA + NH4(+). Functionally, DNA deaminase (cytidine deaminase) which may act as an inhibitor of retrovirus replication and retrotransposon mobility via deaminase-dependent and -independent mechanisms. The chain is DNA dC-&gt;dU-editing enzyme APOBEC-3H from Pongo pygmaeus (Bornean orangutan).